We begin with the raw amino-acid sequence, 272 residues long: Imidazole glycerol phosphate synthase subunit HisF (272 aa).

Residues D11 and D130 contribute to the active site.

This sequence belongs to the HisA/HisF family. Heterodimer of HisH and HisF.

It localises to the cytoplasm. It catalyses the reaction 5-[(5-phospho-1-deoxy-D-ribulos-1-ylimino)methylamino]-1-(5-phospho-beta-D-ribosyl)imidazole-4-carboxamide + L-glutamine = D-erythro-1-(imidazol-4-yl)glycerol 3-phosphate + 5-amino-1-(5-phospho-beta-D-ribosyl)imidazole-4-carboxamide + L-glutamate + H(+). The protein operates within amino-acid biosynthesis; L-histidine biosynthesis; L-histidine from 5-phospho-alpha-D-ribose 1-diphosphate: step 5/9. IGPS catalyzes the conversion of PRFAR and glutamine to IGP, AICAR and glutamate. The HisF subunit catalyzes the cyclization activity that produces IGP and AICAR from PRFAR using the ammonia provided by the HisH subunit. The protein is Imidazole glycerol phosphate synthase subunit HisF of Methanococcus maripaludis (strain DSM 14266 / JCM 13030 / NBRC 101832 / S2 / LL).